A 680-amino-acid polypeptide reads, in one-letter code: Dihydroxyacetone phosphate acyltransferase (680 aa).

Phosphoserine is present on residues Ser-12 and Ser-17. Positions 162 to 167 (HRSYID) match the HXXXXD motif motif. Position 643 is an N6-acetyllysine (Lys-643). A Microbody targeting signal motif is present at residues 678–680 (AKL).

Belongs to the GPAT/DAPAT family. Part of a heterotrimeric complex composed of GNPAT, AGPS and a modified form of GNPAT.

Its subcellular location is the peroxisome membrane. It catalyses the reaction dihydroxyacetone phosphate + an acyl-CoA = a 1-acylglycerone 3-phosphate + CoA. It carries out the reaction dihydroxyacetone phosphate + hexadecanoyl-CoA = 1-hexadecanoylglycerone 3-phosphate + CoA. It functions in the pathway membrane lipid metabolism; glycerophospholipid metabolism. Functionally, dihydroxyacetonephosphate acyltransferase catalyzing the first step in the biosynthesis of plasmalogens, a subset of phospholipids that differ from other glycerolipids by having an alkyl chain attached through a vinyl ether linkage at the sn-1 position of the glycerol backbone, and which unique physical properties have an impact on various aspects of cell signaling and membrane biology. This Bos taurus (Bovine) protein is Dihydroxyacetone phosphate acyltransferase.